We begin with the raw amino-acid sequence, 570 residues long: Guanine nucleotide-binding protein alpha-3 subunit (570 aa).

In terms of domain architecture, PH spans 10–113; sequence RETLRAYLSK…WIEAIKHAIE (104 aa). In terms of domain architecture, G-alpha spans 144–570; sequence PVLKLLLLGT…IISKTLEFYC (427 aa). Residues 147 to 160 form a G1 motif region; the sequence is KLLLLGTGESGKST. Residue 152–159 participates in GTP binding; it reads GTGESGKS. Mg(2+) is bound at residue serine 159. 2 stretches are compositionally biased toward low complexity: residues 254–272 and 290–316; these read NNNS…SSSS and NSNS…RSNS. The tract at residues 254–321 is disordered; the sequence is NNNSNSSSLK…NRSNSDGSSN (68 aa). The interval 386–394 is G2 motif; the sequence is DILKSRATT. GTP-binding positions include 388 to 394, 414 to 418, 483 to 486, and alanine 544; these read LKSRATT, DVAGQ, and NKID. Threonine 394 is a binding site for Mg(2+). Residues 410–419 are G3 motif; the sequence is FRIVDVAGQR. A G4 motif region spans residues 479 to 486; it reads ILFLNKID. The G5 motif stretch occupies residues 542 to 547; it reads TCATDT.

This sequence belongs to the G-alpha family. As to quaternary structure, g proteins are composed of 3 units; alpha, beta and gamma. The alpha chain contains the guanine nucleotide binding site.

Guanine nucleotide-binding proteins (G proteins) are involved as modulators or transducers in various transmembrane signaling systems. G alpha-3 plays a role in development. G alpha-3 mutants fail to aggregate. This is Guanine nucleotide-binding protein alpha-3 subunit (gpaC) from Dictyostelium discoideum (Social amoeba).